Here is a 524-residue protein sequence, read N- to C-terminus: Keratin, type II cytoskeletal 72 (524 aa).

Positions 1–136 are head; sequence MSRQLNLYPG…DPEIQKVRAQ (136 aa). Positions 137–172 are coil 1A; that stretch reads EREQIKALNNKFASFIDKVRFLEQQNQVLGTKWELL. In terms of domain architecture, IF rod spans 137–450; sequence EREQIKALNN…KLLEGEECRM (314 aa). The interval 173-191 is linker 1; the sequence is QQLDLNNCKNNLEPILEGY. Positions 192–283 are coil 1B; sequence TSNLRKQLEM…CLYEGEIAQL (92 aa). The linker 12 stretch occupies residues 284-307; it reads QSHISDTSVILSMDNNRDLDLDSI. A coil 2 region spans residues 308–446; the sequence is IAQVRAQYEE…ATYRKLLEGE (139 aa). A tail region spans residues 447 to 524; it reads ECRMSGEYPN…SSCATKKASR (78 aa). The tract at residues 495-524 is disordered; the sequence is KTKGSCGGSELKDAPAKTSGSSCATKKASR.

It belongs to the intermediate filament family. As to quaternary structure, heterotetramer of two type I and two type II keratins.

In terms of biological role, has a role in hair formation. Specific component of keratin intermediate filaments in the inner root sheath (IRS) of the hair follicle. The sequence is that of Keratin, type II cytoskeletal 72 (KRT72) from Bos taurus (Bovine).